Consider the following 182-residue polypeptide: ADP-ribosylation factor-like protein 3 (182 aa).

Residue Gly-2 is the site of N-myristoyl glycine attachment. Ser-5 carries the phosphoserine modification. GTP-binding positions include 24-31 (GLDNAGKT), Thr-48, 67-71 (DIGGQ), Gly-70, 126-129 (NKQD), and 159-161 (SAL). Residues Thr-31 and Thr-48 each contribute to the Mg(2+) site.

This sequence belongs to the small GTPase superfamily. Arf family. Found in a complex with ARL3, RP2 and UNC119 (or UNC119B); RP2 induces hydrolysis of GTP ARL3 in the complex, leading to the release of UNC119 (or UNC119B). Interacts with RP2; interaction is direct and stimulated with the activated GTP-bound form of ARL3. Interacts with SYS1. Interacts with ARL2BP; the GTP-bound form interacts with ARL2BP. Microtubule-associated protein. Does not interact with TBCC. Interacts with RP2. Interacts with PDE6D; the interaction occurs specifically with the GTP-bound form of ARL3. Interacts with GGA1; the interaction recruits PKD1:PKD2 complex to trans-Golgi network and is required for ciliary targeting of PKD1:PKD2 complex. Interacts with DNAAF9.

The protein resides in the golgi apparatus membrane. The protein localises to the cytoplasm. Its subcellular location is the cytoskeleton. It localises to the spindle. It is found in the nucleus. The protein resides in the microtubule organizing center. The protein localises to the centrosome. Its subcellular location is the cell projection. It localises to the cilium. Functionally, small GTP-binding protein which cycles between an inactive GDP-bound and an active GTP-bound form, and the rate of cycling is regulated by guanine nucleotide exchange factors (GEF) and GTPase-activating proteins (GAP). Required for normal cytokinesis and cilia signaling. Requires assistance from GTPase-activating proteins (GAPs) like RP2 and PDE6D, in order to cycle between inactive GDP-bound and active GTP-bound forms. Required for targeting proteins to the cilium, including myristoylated NPHP3 and prenylated INPP5E. Targets NPHP3 to the ciliary membrane by releasing myristoylated NPHP3 from UNC119B cargo adapter into the cilium. Required for PKD1:PKD2 complex targeting from the trans-Golgi network to the cilium. The chain is ADP-ribosylation factor-like protein 3 (ARL3) from Bos taurus (Bovine).